The sequence spans 339 residues: Type IV secretion system protein PtlH homolog (339 aa).

It belongs to the GSP E family.

This Bordetella parapertussis (strain 12822 / ATCC BAA-587 / NCTC 13253) protein is Type IV secretion system protein PtlH homolog (ptlH).